The following is a 61-amino-acid chain: Large ribosomal subunit protein uL30 (61 aa).

It belongs to the universal ribosomal protein uL30 family. Part of the 50S ribosomal subunit.

The sequence is that of Large ribosomal subunit protein uL30 from Chlorobium phaeovibrioides (strain DSM 265 / 1930) (Prosthecochloris vibrioformis (strain DSM 265)).